The chain runs to 641 residues: Serine/threonine-protein kinase PK-1 (641 aa).

The Protein kinase domain maps to 18-280 (YRVDARIAVG…ARARDARARL (263 aa)). Residues 24 to 32 (IAVGGMATV) and Lys47 contribute to the ATP site. Asp141 serves as the catalytic Proton acceptor. The disordered stretch occupies residues 317 to 347 (LPVNEEDEGADAAHRTSRFRSPPPLPPRGRT). PASTA domains follow at residues 375-441 (SGQF…TLSK), 442-508 (GPRT…LTVS), 509-576 (KGAP…TLSK), and 577-641 (GPEM…IEIR). The segment at 469 to 494 (KPGMSTREFSDSVPAGSVISTEPGKG) is disordered.

It belongs to the protein kinase superfamily. Ser/Thr protein kinase family. Autophosphorylated on threonine residue(s).

The enzyme catalyses L-seryl-[protein] + ATP = O-phospho-L-seryl-[protein] + ADP + H(+). The catalysed reaction is L-threonyl-[protein] + ATP = O-phospho-L-threonyl-[protein] + ADP + H(+). The protein is Serine/threonine-protein kinase PK-1 (spk1) of Streptomyces toyocaensis.